A 323-amino-acid polypeptide reads, in one-letter code: Ig gamma chain C region (323 aa).

Ig-like domains are found at residues proline 6–alanine 96, proline 114–serine 213, and proline 222–serine 318.

This is Ig gamma chain C region from Oryctolagus cuniculus (Rabbit).